Consider the following 468-residue polypeptide: Inositol polyphosphate 5-phosphatase K (468 aa).

Residues 34 to 337 (VHVVTWNVAS…SDHKPVTGTF (304 aa)) form a catalytic region. Residues 318–448 (NYVSHMAYSI…HSVVGISQPF (131 aa)) form a required for interaction with GPR78 and PAK1 region. The tract at residues 340–468 (ELNPLMSVPL…DTLYEPEPQI (129 aa)) is required for ruffle localization.

It belongs to the inositol 1,4,5-trisphosphate 5-phosphatase type II family. As to quaternary structure, interacts with GPR78; necessary for INPP5K localization at the endoplasmic reticulum. Interacts with PAK1; competes with GPR78. Expressed in the skeletal muscle and the eye.

Its subcellular location is the endoplasmic reticulum. The protein localises to the cytoplasm. The catalysed reaction is 1D-myo-inositol 1,4,5-trisphosphate + H2O = 1D-myo-inositol 1,4-bisphosphate + phosphate. It carries out the reaction 1,2-dioctanoyl-sn-glycero-3-phospho-(1D-myo-inositol-3,4,5-trisphosphate) + H2O = 1,2-dioctanoyl-sn-glycero-3-phospho-(1D-myo-inositol-3,4-bisphosphate) + phosphate. The enzyme catalyses 1D-myo-inositol 1,3,4,5-tetrakisphosphate + H2O = 1D-myo-inositol 1,3,4-trisphosphate + phosphate. It catalyses the reaction a 1,2-diacyl-sn-glycero-3-phospho-(1D-myo-inositol-4,5-bisphosphate) + H2O = a 1,2-diacyl-sn-glycero-3-phospho-(1D-myo-inositol 4-phosphate) + phosphate. The catalysed reaction is a 1,2-diacyl-sn-glycero-3-phospho-(1D-myo-inositol-3,4,5-trisphosphate) + H2O = a 1,2-diacyl-sn-glycero-3-phospho-(1D-myo-inositol-3,4-bisphosphate) + phosphate. Its function is as follows. Inositol 5-phosphatase which acts on inositol 1,4,5-trisphosphate, inositol 1,3,4,5-tetrakisphosphate, phosphatidylinositol 4,5-bisphosphate and phosphatidylinositol 3,4,5-trisphosphate. Has 6-fold higher affinity for phosphatidylinositol 4,5-bisphosphate than for inositol 1,4,5-trisphosphate. Negatively regulates assembly of the actin cytoskeleton. Controls insulin-dependent glucose uptake among inositol 3,4,5-trisphosphate phosphatases; therefore, is the specific regulator for insulin signaling in skeletal muscle. The polypeptide is Inositol polyphosphate 5-phosphatase K (Mus musculus (Mouse)).